Here is a 135-residue protein sequence, read N- to C-terminus: Calcium-binding protein KIC (135 aa).

The EF-hand domain maps to 74 to 109 (MSKEDAQGMVREGDLDGDGALNQTEFCVLMVRLSPE). The Ca(2+) site is built by aspartate 87, aspartate 89, aspartate 91, and glutamate 98.

In terms of assembly, interacts with KCBP (via C-terminus). KIC and calmodulin show competitive binding to KCBP. Interacts with CML42. Binds to ABCG36. Expressed in stems, leaves and flowers.

Its function is as follows. Calcium-binding regulatory protein that interacts with kinesin motor protein KCBP in a calcium-dependent manner. Inhibits KCBP microtubule binding activity and microtubule-stimulated ATPase activity. Involved in the regulation of trichome branching through its interaction with KCBP. The sequence is that of Calcium-binding protein KIC from Arabidopsis thaliana (Mouse-ear cress).